The chain runs to 480 residues: Siroheme synthase (480 aa).

Residues 1 to 203 (MNYFPIFANL…QQTAQAEQEL (203 aa)) form a precorrin-2 dehydrogenase /sirohydrochlorin ferrochelatase region. NAD(+) contacts are provided by residues 22-23 (SV) and 43-44 (NQ). S128 bears the Phosphoserine mark. Residues 214–480 (GFVSLVGAGP…GGLNAGQRAA (267 aa)) are uroporphyrinogen-III C-methyltransferase. P223 is an S-adenosyl-L-methionine binding site. The Proton acceptor role is filled by D246. K268 (proton donor) is an active-site residue. Residues 299–301 (GGD), V304, 329–330 (TA), M381, and G410 contribute to the S-adenosyl-L-methionine site.

This sequence in the N-terminal section; belongs to the precorrin-2 dehydrogenase / sirohydrochlorin ferrochelatase family. It in the C-terminal section; belongs to the precorrin methyltransferase family.

The enzyme catalyses uroporphyrinogen III + 2 S-adenosyl-L-methionine = precorrin-2 + 2 S-adenosyl-L-homocysteine + H(+). It carries out the reaction precorrin-2 + NAD(+) = sirohydrochlorin + NADH + 2 H(+). It catalyses the reaction siroheme + 2 H(+) = sirohydrochlorin + Fe(2+). It participates in cofactor biosynthesis; adenosylcobalamin biosynthesis; precorrin-2 from uroporphyrinogen III: step 1/1. Its pathway is cofactor biosynthesis; adenosylcobalamin biosynthesis; sirohydrochlorin from precorrin-2: step 1/1. The protein operates within porphyrin-containing compound metabolism; siroheme biosynthesis; precorrin-2 from uroporphyrinogen III: step 1/1. It functions in the pathway porphyrin-containing compound metabolism; siroheme biosynthesis; siroheme from sirohydrochlorin: step 1/1. It participates in porphyrin-containing compound metabolism; siroheme biosynthesis; sirohydrochlorin from precorrin-2: step 1/1. In terms of biological role, multifunctional enzyme that catalyzes the SAM-dependent methylations of uroporphyrinogen III at position C-2 and C-7 to form precorrin-2 via precorrin-1. Then it catalyzes the NAD-dependent ring dehydrogenation of precorrin-2 to yield sirohydrochlorin. Finally, it catalyzes the ferrochelation of sirohydrochlorin to yield siroheme. This chain is Siroheme synthase, found in Neisseria meningitidis serogroup C (strain 053442).